The primary structure comprises 255 residues: Triosephosphate isomerase (255 aa).

9–11 (NWK) serves as a coordination point for substrate. The active-site Electrophile is the His95. The active-site Proton acceptor is Glu167. Residues Gly173, Ser212, and 233–234 (GG) each bind substrate.

This sequence belongs to the triosephosphate isomerase family. Homodimer.

The protein localises to the cytoplasm. It catalyses the reaction D-glyceraldehyde 3-phosphate = dihydroxyacetone phosphate. It functions in the pathway carbohydrate biosynthesis; gluconeogenesis. Its pathway is carbohydrate degradation; glycolysis; D-glyceraldehyde 3-phosphate from glycerone phosphate: step 1/1. Involved in the gluconeogenesis. Catalyzes stereospecifically the conversion of dihydroxyacetone phosphate (DHAP) to D-glyceraldehyde-3-phosphate (G3P). The polypeptide is Triosephosphate isomerase (Enterobacter cloacae).